Here is a 309-residue protein sequence, read N- to C-terminus: Postacrosomal sheath WW domain-binding protein (309 aa).

Residues G45 to Q87 form the GRAM domain. 10 consecutive repeat copies span residues Y175–G181, Y182–G188, Y189–G195, Y217–G223, Y224–G230, Y231–G237, Y238–G244, Y245–G251, Y252–G258, and Y259–G265. The interval Y175–G265 is 10 X 7 AA tandem repeat of Y-G-X-P-P-X-G. Residues P186–Y189 carry the PPxY motif motif. Low complexity predominate over residues G251–G272. Residues G251–S309 form a disordered region. Residues S298–S309 are compositionally biased toward polar residues.

In terms of tissue distribution, expressed in testis.

May play a role in meiotic resumption and pronuclear formation, mediated by a WW domain-signaling pathway during fertilization. The chain is Postacrosomal sheath WW domain-binding protein (WBP2NL) from Homo sapiens (Human).